The following is a 129-amino-acid chain: UPF0325 protein YPTS_3127 (129 aa).

Belongs to the UPF0325 family.

The protein is UPF0325 protein YPTS_3127 of Yersinia pseudotuberculosis serotype IB (strain PB1/+).